Consider the following 684-residue polypeptide: Divalent metal transporter 1 (684 aa).

Topologically, residues 1-228 (MEKDFTERST…YRNKLSLYNK (228 aa)) are cytoplasmic. The segment at 153–195 (NKRNNNNNNNNNNNNNNNNNNNNNNNNNNNNNNNNSNNVDNRK) is disordered. The span at 156 to 191 (NNNNNNNNNNNNNNNNNNNNNNNNNNNNNNNNSNNV) shows a compositional bias: low complexity. A helical membrane pass occupies residues 229 to 247 (LRMCFNYFGPGWIVAIAYL). At 248 to 275 (DPGNLCSNLNVGLIRSPDPTLEKDYSGY) the chain is on the vacuolar side. A helical membrane pass occupies residues 276-299 (YLLWIMVYGHMLGFIFQVLSMRLG). Over 300 to 319 (HVTGLDLASLCSKEFDRTTS) the chain is Cytoplasmic. The helical transmembrane segment at 320-345 (TIIYVLVQIAIWGAHIQAIIGTFIAL) threads the bilayer. Over 346 to 350 (NLIFG) the chain is Vacuolar. The helical transmembrane segment at 351-370 (ISVKVAIFYTLFEAIIYSFL) threads the bilayer. At 371-381 (ENKSLGLLENV) the chain is on the cytoplasmic side. The chain crosses the membrane as a helical span at residues 382–404 (LSFLVGILAVSFFVNVFMTPINF). The Vacuolar segment spans residues 405–423 (KELAISILYPRIPKGKEID). Residues 424–445 (ALALLGSIISAHIFYLHTNLTA) form a helical membrane-spanning segment. At 446-465 (KKKSVICNDLSLRRYNTLGT) the chain is on the cytoplasmic side. The chain crosses the membrane as a helical span at residues 466 to 487 (IESGGSLFLSCLTNCIIVLTFA). Over 488-515 (EVNLKSFERRDQYNLFTAYEVMRKSFGK) the chain is Vacuolar. A helical membrane pass occupies residues 516-534 (ISMYIWSFGLLSSGNNSSF). Topologically, residues 535–554 (MCEYASKSVVEGFLNKKINT) are cytoplasmic. Residues 555–573 (FVRVFTFRLMLFSLLYMFL) form a helical membrane-spanning segment. Topologically, residues 574-584 (TLNKYTLDQLT) are vacuolar. A helical membrane pass occupies residues 585 to 603 (NFINVIQVLLLPMATIPLY). The Cytoplasmic portion of the chain corresponds to 604 to 622 (RFSIHENVLGEFRLKKFPK). The helical transmembrane segment at 623–645 (FAVFLIIIAIIISNVLLTFLDFV) threads the bilayer. At 646-650 (HKETS) the chain is on the vacuolar side. The helical transmembrane segment at 651-673 (LITIFFLVIFSFLYFGFIIYFFN) threads the bilayer. The Cytoplasmic segment spans residues 674–684 (IPIKKNYIQRN).

Belongs to the NRAMP (TC 2.A.55) family.

It is found in the vacuole membrane. It catalyses the reaction Fe(2+)(in) = Fe(2+)(out). Iron transporter. Required for parasite development during the blood stages. Required for apicoplast biogenesis. Required for mitochondrial polarization. The polypeptide is Divalent metal transporter 1 (Plasmodium falciparum (isolate 3D7)).